The chain runs to 201 residues: Glutathione peroxidase 1, mitochondrial (201 aa).

The N-terminal 27 residues, 1–27 (MLLTRKNVAVRPARAARRDVRAMSLLG), are a transit peptide targeting the mitochondrion. Sec-75 is an active-site residue. Sec-75 is a non-standard amino acid (selenocysteine).

Its subcellular location is the mitochondrion. The catalysed reaction is 2 glutathione + H2O2 = glutathione disulfide + 2 H2O. Functionally, may constitute a glutathione peroxidase-like protective system against oxidative stresses. Hydrogen peroxide, tert-butyl hydroperoxide and cumene, but not phosphatidylcholine hydroperoxide, can act as acceptors. This chain is Glutathione peroxidase 1, mitochondrial, found in Chlamydomonas reinhardtii (Chlamydomonas smithii).